Consider the following 105-residue polypeptide: Small ribosomal subunit protein uS10 (105 aa).

This sequence belongs to the universal ribosomal protein uS10 family. In terms of assembly, part of the 30S ribosomal subunit.

Functionally, involved in the binding of tRNA to the ribosomes. This chain is Small ribosomal subunit protein uS10, found in Trichodesmium erythraeum (strain IMS101).